The following is a 421-amino-acid chain: L-Ala-D/L-amino acid epimerase (421 aa).

Substrate contacts are provided by residues threonine 193 and 218–220; that span reads KLK. Mg(2+) is bound by residues aspartate 247, glutamate 275, and aspartate 304. Substrate-binding positions include lysine 328 and 380-382; that span reads DLD.

Belongs to the mandelate racemase/muconate lactonizing enzyme family. Mg(2+) is required as a cofactor.

Catalyzes the epimerization of various hydrophobic and polar dipeptides. Has epimerase activity with L-Ala-L-Ala, L-Ala-L-Ser, L-Ala-L-Thr and L-Ala-L-Trp (in vitro). In Populus trichocarpa (Western balsam poplar), this protein is L-Ala-D/L-amino acid epimerase.